The chain runs to 321 residues: Ribose-phosphate pyrophosphokinase (321 aa).

ATP contacts are provided by residues Asp44 to Glu46 and Arg103 to Gln104. 2 residues coordinate Mg(2+): His137 and Asp179. Lys202 is an active-site residue. D-ribose 5-phosphate is bound by residues Arg204, Asp228, and Asp232 to Thr236.

Belongs to the ribose-phosphate pyrophosphokinase family. Class I subfamily. As to quaternary structure, homohexamer. It depends on Mg(2+) as a cofactor.

It is found in the cytoplasm. It carries out the reaction D-ribose 5-phosphate + ATP = 5-phospho-alpha-D-ribose 1-diphosphate + AMP + H(+). It functions in the pathway metabolic intermediate biosynthesis; 5-phospho-alpha-D-ribose 1-diphosphate biosynthesis; 5-phospho-alpha-D-ribose 1-diphosphate from D-ribose 5-phosphate (route I): step 1/1. Its function is as follows. Involved in the biosynthesis of the central metabolite phospho-alpha-D-ribosyl-1-pyrophosphate (PRPP) via the transfer of pyrophosphoryl group from ATP to 1-hydroxyl of ribose-5-phosphate (Rib-5-P). The protein is Ribose-phosphate pyrophosphokinase of Staphylococcus epidermidis (strain ATCC 35984 / DSM 28319 / BCRC 17069 / CCUG 31568 / BM 3577 / RP62A).